The chain runs to 212 residues: Fe/S biogenesis protein NfuA (212 aa).

2 residues coordinate [4Fe-4S] cluster: Cys169 and Cys172.

This sequence belongs to the NfuA family. As to quaternary structure, homodimer. It depends on [4Fe-4S] cluster as a cofactor.

Its function is as follows. Involved in iron-sulfur cluster biogenesis. Binds a 4Fe-4S cluster, can transfer this cluster to apoproteins, and thereby intervenes in the maturation of Fe/S proteins. Could also act as a scaffold/chaperone for damaged Fe/S proteins. This Acinetobacter baumannii (strain SDF) protein is Fe/S biogenesis protein NfuA.